A 298-amino-acid chain; its full sequence is Mitochondrial glycine transporter (298 aa).

Solcar repeat units follow at residues 5–84 (TKTR…MRTA), 105–189 (LTTY…AKEV), and 211–295 (TSTL…LIKL). 6 consecutive transmembrane segments (helical) span residues 11–36 (LIGGFFGGLTSAVALQPLDLLKTRIQ), 59–85 (GTLPSAIRTSLGSALYLSSLNLMRTAI), 111–136 (LISGALARGAVGYMTMPVTVIKVRYE), 164–187 (GFGPTLVRDAPYSGIYVLLYEKAK), 215–241 (VNSTSAILSACLATTITAPFDTIKTRM), and 270–288 (GLSMRLTRKALSAGIAWGI).

The protein belongs to the mitochondrial carrier (TC 2.A.29) family. SLC25A38 subfamily.

It localises to the mitochondrion inner membrane. The enzyme catalyses glycine(in) = glycine(out). Its function is as follows. Mitochondrial glycine transporter that imports glycine into the mitochondrial matrix. Plays an important role in providing glycine for the first enzymatic step in heme biosynthesis, the condensation of glycine with succinyl-CoA to produce 5-aminolevulinate (ALA) in the mitochondrial matrix. In Vanderwaltozyma polyspora (strain ATCC 22028 / DSM 70294 / BCRC 21397 / CBS 2163 / NBRC 10782 / NRRL Y-8283 / UCD 57-17) (Kluyveromyces polysporus), this protein is Mitochondrial glycine transporter.